We begin with the raw amino-acid sequence, 761 residues long: MESPQLCLVLLVLGFSSGGVSATPVLEARPQVSCSLEGVEIKGGSFQLLQGGQALEYLCPSGFYPYPVQTRTCRSTGSWSDLQTRDQKIVQKAECRAIRCPRPQDFENGEFWPRSPFYNLSDQISFQCYDGYVLRGSANRTCQENGRWDGQTAICDDGAGYCPNPGIPIGTRKVGSQYRLEDIVTYHCSRGLVLRGSQKRKCQEGGSWSGTEPSCQDSFMYDSPQEVAEAFLSSLTETIEGADAEDGHSPGEQQKRKIVLDPSGSMNIYLVLDGSDSIGSSNFTGAKRCLTNLIEKVASYGVRPRYGLLTYATVPKVLVRVSDERSSDADWVTEKLNQISYEDHKLKSGTNTKRALQAVYSMMSWAGDAPPEGWNRTRHVIIIMTDGLHNMGGNPVTVIQDIRALLDIGRDPKNPREDYLDVYVFGVGPLVDSVNINALASKKDNEHHVFKVKDMEDLENVFYQMIDETKSLSLCGMVWEHKKGNDYHKQPWQAKISVTRPLKGHETCMGAVVSEYFVLTAAHCFMVDDQKHSIKVSVGGQRRDLEIEEVLFHPKYNINGKKAEGIPEFYDYDVALVKLKNKLKYGQTLRPICLPCTEGTTRALRLPQTATCKQHKEQLLPVKDVKALFVSEQGKSLTRKEVYIKNGDKKASCERDATKAQGYEKVKDASEVVTPRFLCTGGVDPYADPNTCKGDSGGPLIVHKRSRFIQVGVISWGVVDVCRDQRRQQLVPSYARDFHINLFQVLPWLKDKLKDEDLGFL.

The first 22 residues, 1–22, serve as a signal peptide directing secretion; that stretch reads MESPQLCLVLLVLGFSSGGVSA. Sushi domains are found at residues 32–97, 98–157, and 160–217; these read VSCS…ECRA, IRCP…ICDD, and GYCP…SCQD. 6 disulfides stabilise this stretch: Cys-34-Cys-73, Cys-59-Cys-95, Cys-100-Cys-142, Cys-128-Cys-155, Cys-162-Cys-202, and Cys-188-Cys-215. 2 N-linked (GlcNAc...) asparagine glycosylation sites follow: Asn-119 and Asn-139. One can recognise a VWFA domain in the interval 267–466; sequence NIYLVLDGSD…DLENVFYQMI (200 aa). Ser-275 and Ser-277 together coordinate Mg(2+). Residue Asn-282 is glycosylated (N-linked (GlcNAc...) asparagine). Residue Thr-350 participates in Mg(2+) binding. Asn-375 is a glycosylation site (N-linked (GlcNAc...) asparagine). Residues 474 to 754 enclose the Peptidase S1 domain; it reads LCGMVWEHKK…VLPWLKDKLK (281 aa). Intrachain disulfides connect Cys-475–Cys-593, Cys-508–Cys-524, Cys-596–Cys-612, Cys-653–Cys-679, and Cys-692–Cys-722. Catalysis depends on charge relay system residues His-523 and Asp-573. The active-site Charge relay system is Ser-696.

This sequence belongs to the peptidase S1 family. In terms of assembly, monomer. Interacts with complement C3b; this interaction is dependent on the presence of Mg(2+). As to quaternary structure, catalytic component of the C3 convertase of the alternative complement pathway, also named C3bBb, composed of complement factor B Bb and complement C3b. Catalytic component of the C5 convertase of the alternative complement pathway, also named C3bBb3b, composed of complement factor B Bb and additional molecules of complement C3b. Interacts to CFP; this interaction contributes to the stabilization of the active C3-convertase enzyme complex. It depends on Mg(2+) as a cofactor. Mn(2+) serves as cofactor. In terms of processing, cleaved by CFD following activation of the alternative complement system, generating Ba and Bb chains. Cleavage and activation takes place when CFB is already associated with complement C3b.

The protein localises to the secreted. It is found in the cell surface. It carries out the reaction Cleavage of Arg-|-Ser bond in complement component C3 alpha-chain to yield C3a and C3b, and Arg-|-Xaa bond in complement component C5 alpha-chain to yield C5a and C5b.. Its function is as follows. Precursor of the catalytic component of the C3 and C5 convertase complexes of the alternative pathway of the complement system, a cascade of proteins that leads to phagocytosis and breakdown of pathogens and signaling that strengthens the adaptive immune system. The alternative complement pathway acts as an amplification loop that enhances other complement pathways (classical, lectin and GZMK) by promoting formation of additional C3 and C5 convertases. CFB is cleaved and activated by CFD to generate Ba and Bb chains; Bb chain constituting the catalytic component of the C3 and C5 convertases. Functionally, serine protease component of the complement C3 and C5 convertase complexes of the alternative complement pathway. Following cleavage and activation by factor D (CFD), forms the C3 convertase together with complement C3b. As part of the C3 convertase, cleaves and activates C3 into C3a anaphylatoxin and C3b opsonin, the next components of the complement pathways. When an additional complement C3b molecule binds to the C3 convertase, forms the C5 convertase, which cleaves and activates C5 into C5a anaphylatoxin and C5b component of the membrane attack complex. Involved in proliferation and differentiation of preactivated B-lymphocytes, rapid spreading of peripheral blood monocytes, stimulation of lymphocyte blastogenesis and lysis of erythrocytes. This is Complement factor B (Cfb) from Mus musculus (Mouse).